The chain runs to 421 residues: Testin (421 aa).

The 108-residue stretch at 92–199 folds into the PET domain; the sequence is MILTNPVAAK…GDVKLPYEMG (108 aa). A disordered region spans residues 133–164; the sequence is EKQPVAGSEGAQYRKKQLAKQLPAHDQDPSKC. A compositionally biased stretch (basic and acidic residues) spans 155–164; that stretch reads PAHDQDPSKC. LIM zinc-binding domains are found at residues 234-297, 299-359, and 362-421; these read YFCY…CDSE, PRCA…NHAV, and QGCH…KMMS.

Belongs to the prickle / espinas / testin family. As to quaternary structure, interacts via LIM domain 1 with ZYX. Interacts (via LIM domain 3) with ENAH and VASP. Interacts with ALKBH4, talin, actin, alpha-actinin, GRIP1 and PXN. Interacts (via LIM domain 2) with ACTL7A (via N-terminus). Heterodimer with ACTL7A; the heterodimer interacts with ENAH to form a heterotrimer.

The protein localises to the cytoplasm. The protein resides in the cell junction. It localises to the focal adhesion. Functionally, scaffold protein that may play a role in cell adhesion, cell spreading and in the reorganization of the actin cytoskeleton. Plays a role in the regulation of cell proliferation. May act as a tumor suppressor. This Oryctolagus cuniculus (Rabbit) protein is Testin (TES).